Consider the following 106-residue polypeptide: Pyrimidine/purine nucleoside phosphorylase (106 aa).

This sequence belongs to the nucleoside phosphorylase PpnP family.

It catalyses the reaction a purine D-ribonucleoside + phosphate = a purine nucleobase + alpha-D-ribose 1-phosphate. The catalysed reaction is adenosine + phosphate = alpha-D-ribose 1-phosphate + adenine. It carries out the reaction cytidine + phosphate = cytosine + alpha-D-ribose 1-phosphate. The enzyme catalyses guanosine + phosphate = alpha-D-ribose 1-phosphate + guanine. It catalyses the reaction inosine + phosphate = alpha-D-ribose 1-phosphate + hypoxanthine. The catalysed reaction is thymidine + phosphate = 2-deoxy-alpha-D-ribose 1-phosphate + thymine. It carries out the reaction uridine + phosphate = alpha-D-ribose 1-phosphate + uracil. The enzyme catalyses xanthosine + phosphate = alpha-D-ribose 1-phosphate + xanthine. Functionally, catalyzes the phosphorolysis of diverse nucleosides, yielding D-ribose 1-phosphate and the respective free bases. Can use uridine, adenosine, guanosine, cytidine, thymidine, inosine and xanthosine as substrates. Also catalyzes the reverse reactions. This Paraburkholderia xenovorans (strain LB400) protein is Pyrimidine/purine nucleoside phosphorylase.